A 79-amino-acid polypeptide reads, in one-letter code: Small ribosomal subunit protein bS16 (79 aa).

This sequence belongs to the bacterial ribosomal protein bS16 family.

In Nitratidesulfovibrio vulgaris (strain DSM 19637 / Miyazaki F) (Desulfovibrio vulgaris), this protein is Small ribosomal subunit protein bS16.